Consider the following 276-residue polypeptide: Rhomboid protease GlpG (276 aa).

The next 6 membrane-spanning stretches (helical) occupy residues 94-114, 142-162, 169-189, 192-212, 229-249, and 250-270; these read GPVTWVMMIACVVVFIAMQIL, ALMHFSLMHILFNLLWWWYLG, LGSGKLIVITLISALLSGYVQ, FSGPWFGGLSGVVYALMGYVW, LIIFALIWIVAGWFDLFGMSM, and ANGAHIAGLAVGLAMAFVDSL. The active-site Nucleophile is serine 201. Residue histidine 254 is part of the active site.

Belongs to the peptidase S54 family.

The protein resides in the cell inner membrane. The enzyme catalyses Cleaves type-1 transmembrane domains using a catalytic dyad composed of serine and histidine that are contributed by different transmembrane domains.. Rhomboid-type serine protease that catalyzes intramembrane proteolysis. This Escherichia coli O157:H7 protein is Rhomboid protease GlpG.